The following is a 258-amino-acid chain: Snake venom serine protease KN13 (258 aa).

A signal peptide spans 1–18 (MVLIRVLANLLILQLSYA). The propeptide occupies 19 to 24 (QRSSEL). The region spanning 25–249 (VIGGDECNIN…HLDWIQNIIA (225 aa)) is the Peptidase S1 domain. Disulfide bonds link C31/C163, C50/C66, C98/C256, C142/C210, C174/C189, and C200/C225. H65 serves as the catalytic Charge relay system. A glycan (N-linked (GlcNAc...) asparagine) is linked at N103. Residue D110 is the Charge relay system of the active site. N121, N122, N154, and N170 each carry an N-linked (GlcNAc...) asparagine glycan. Residue S204 is the Charge relay system of the active site. The N-linked (GlcNAc...) asparagine glycan is linked to N251.

The protein belongs to the peptidase S1 family. Snake venom subfamily. Monomer. In terms of tissue distribution, expressed by the venom gland.

It is found in the secreted. In terms of biological role, snake venom serine protease that may act in the hemostasis system of the prey. In Trimeresurus stejnegeri (Chinese green tree viper), this protein is Snake venom serine protease KN13.